We begin with the raw amino-acid sequence, 545 residues long: CTP synthase (545 aa).

The amidoligase domain stretch occupies residues 1 to 266 (MATNYIFVTG…DDFVCERFRL (266 aa)). CTP is bound at residue Ser14. A UTP-binding site is contributed by Ser14. ATP is bound by residues 15–20 (SLGKGI) and Asp72. Mg(2+) is bound by residues Asp72 and Glu140. Residues 147–149 (DIE), 187–192 (KTKPTQ), and Lys223 each bind CTP. Residues 187–192 (KTKPTQ) and Lys223 contribute to the UTP site. Position 239-241 (239-241 (KDV)) interacts with ATP. The 252-residue stretch at 291–542 (TIGMVGKYTE…VKAAYENHKK (252 aa)) folds into the Glutamine amidotransferase type-1 domain. Gly352 is an L-glutamine binding site. Cys379 acts as the Nucleophile; for glutamine hydrolysis in catalysis. L-glutamine contacts are provided by residues 380–383 (LGMQ), Glu403, and Arg470. Catalysis depends on residues His515 and Glu517.

The protein belongs to the CTP synthase family. In terms of assembly, homotetramer.

It carries out the reaction UTP + L-glutamine + ATP + H2O = CTP + L-glutamate + ADP + phosphate + 2 H(+). The enzyme catalyses L-glutamine + H2O = L-glutamate + NH4(+). The catalysed reaction is UTP + NH4(+) + ATP = CTP + ADP + phosphate + 2 H(+). It functions in the pathway pyrimidine metabolism; CTP biosynthesis via de novo pathway; CTP from UDP: step 2/2. Allosterically activated by GTP, when glutamine is the substrate; GTP has no effect on the reaction when ammonia is the substrate. The allosteric effector GTP functions by stabilizing the protein conformation that binds the tetrahedral intermediate(s) formed during glutamine hydrolysis. Inhibited by the product CTP, via allosteric rather than competitive inhibition. Its function is as follows. Catalyzes the ATP-dependent amination of UTP to CTP with either L-glutamine or ammonia as the source of nitrogen. Regulates intracellular CTP levels through interactions with the four ribonucleotide triphosphates. This Haemophilus influenzae (strain ATCC 51907 / DSM 11121 / KW20 / Rd) protein is CTP synthase.